The chain runs to 184 residues: Probable cobalt-precorrin-6B C(15)-methyltransferase (decarboxylating) (184 aa).

Residues Thr-12, 36 to 40 (GCGTG), Asp-59, and Ala-87 contribute to the S-adenosyl-L-methionine site.

This sequence belongs to the methyltransferase superfamily. Archaeal-type CbiT family.

The catalysed reaction is Co-precorrin-6B + S-adenosyl-L-methionine = Co-precorrin-7 + S-adenosyl-L-homocysteine + CO2. It functions in the pathway cofactor biosynthesis; adenosylcobalamin biosynthesis; cob(II)yrinate a,c-diamide from sirohydrochlorin (anaerobic route): step 8/10. In terms of biological role, catalyzes the methylation of C-15 in cobalt-precorrin-6B followed by the decarboxylation of C-12 to form cobalt-precorrin-7. The chain is Probable cobalt-precorrin-6B C(15)-methyltransferase (decarboxylating) from Methanosarcina mazei (strain ATCC BAA-159 / DSM 3647 / Goe1 / Go1 / JCM 11833 / OCM 88) (Methanosarcina frisia).